We begin with the raw amino-acid sequence, 778 residues long: High affinity nerve growth factor receptor (778 aa).

An N-terminal signal peptide occupies residues 1 to 14 (WGCLRLPLPLCHAL). The Extracellular segment spans residues 15–400 (AAHCRCPASH…VETADEHTFG (386 aa)). Residues Cys-18 and Cys-20 are joined by a disulfide bond. 2 LRR repeats span residues 71–92 (DLRH…AFQD) and 95–116 (RLSH…TFQH). Asn-100, Asn-130, Asn-143, Asn-151, Asn-194, Asn-234, Asn-262, Asn-300, Asn-320, Asn-340, and Asn-384 each carry an N-linked (GlcNAc...) asparagine glycan. Residues 127–175 (NPFNCSCGIRWLQLWQNGSRAELGNQSLLCWEGSMLVALDSHPLHDCEP) enclose the LRRCT domain. Cys-133 and Cys-173 are disulfide-bonded. 2 consecutive Ig-like C2-type domains span residues 175–262 (PPTA…VMLN) and 281–347 (WCIP…VVQN). A disulfide bridge links Cys-282 with Cys-327. The helical transmembrane segment at 401–421 (VSVAVALAVFASLFLSVMLIA) threads the bilayer. The Cytoplasmic portion of the chain corresponds to 422–778 (LNKCGHRSKF…TPPIYLDILG (357 aa)). Tyr-479 is subject to Phosphotyrosine; by autocatalysis. One can recognise a Protein kinase domain in the interval 493-763 (IVLKWELGEG…RSIQDIHSRL (271 aa)). Residues 499–507 (LGEGAFGKV) and Lys-527 each bind ATP. The Proton acceptor role is filled by Asp-633. Residues Tyr-659, Tyr-663, Tyr-664, and Tyr-773 each carry the phosphotyrosine; by autocatalysis modification.

It belongs to the protein kinase superfamily. Tyr protein kinase family. Insulin receptor subfamily. As to quaternary structure, exists in a dynamic equilibrium between monomeric (low affinity) and dimeric (high affinity) structures. Homodimerization is induced by NGF dimer binding. Interacts with PTPRS. In terms of processing, ligand-mediated auto-phosphorylation. Post-translationally, ubiquitinated. Undergoes polyubiquitination upon activation; regulated by NGFR. Ubiquitination regulates the internalization of the receptor.

The protein resides in the cell membrane. It is found in the early endosome membrane. It localises to the late endosome membrane. The protein localises to the recycling endosome membrane. It carries out the reaction L-tyrosyl-[protein] + ATP = O-phospho-L-tyrosyl-[protein] + ADP + H(+). The pro-survival signaling effect of NTRK1 in neurons requires its endocytosis into signaling early endosomes and its retrograde axonal transport. Its function is as follows. Receptor tyrosine kinase involved in the development and the maturation of the central and peripheral nervous systems through regulation of proliferation, differentiation and survival of sympathetic and nervous neurons. High affinity receptor for NGF which is its primary ligand, it can also bind and be activated by NTF3/neurotrophin-3. Upon dimeric NGF ligand-binding, undergoes homodimerization, autophosphorylation and activation. Recruits, phosphorylates and/or activates several downstream effectors that regulate distinct overlapping signaling cascades driving cell survival and differentiation. In absence of ligand and activation, may promote cell death, making the survival of neurons dependent on trophic factors. The polypeptide is High affinity nerve growth factor receptor (NTRK1) (Gallus gallus (Chicken)).